The chain runs to 692 residues: Elongation factor G (692 aa).

One can recognise a tr-type G domain in the interval 8-282 (ENTRNIGIMA…AVIDYLPSPL (275 aa)). Residues 17–24 (AHIDAGKT), 81–85 (DTPGH), and 135–138 (NKMD) contribute to the GTP site.

It belongs to the TRAFAC class translation factor GTPase superfamily. Classic translation factor GTPase family. EF-G/EF-2 subfamily.

It is found in the cytoplasm. Functionally, catalyzes the GTP-dependent ribosomal translocation step during translation elongation. During this step, the ribosome changes from the pre-translocational (PRE) to the post-translocational (POST) state as the newly formed A-site-bound peptidyl-tRNA and P-site-bound deacylated tRNA move to the P and E sites, respectively. Catalyzes the coordinated movement of the two tRNA molecules, the mRNA and conformational changes in the ribosome. This chain is Elongation factor G, found in Bacillus cereus (strain ATCC 10987 / NRS 248).